A 309-amino-acid polypeptide reads, in one-letter code: MEQDNTTLLTEFVLTGLTYQPEWKMPLFLVFLVIYLITIVWNLGLIALIWNDPQLHIPMYFFLGSLAFVDAWISSTVTPKMLVNFLAKNRMISLSECMIQFFSFAFGGTTECFLLATMAYDRYVAICKPLLYPVIMNNSLCIRLLAFSFLGGFLHALIHEVLIFRLTFCNSNIIHHFYCDIIPLFMISCTDPSINFLMVFILSGSIQVFTIVTVLNSYTFALFTILKKKSVRGVRKAFSTCGAHLLSVSLYYGPLIFMYLRPASPQADDQDMIDSVFYTIIIPLLNPIIYSLRNKQVIDSFTKMVKRNV.

Topologically, residues 1–28 are extracellular; the sequence is MEQDNTTLLTEFVLTGLTYQPEWKMPLF. Asn5 is a glycosylation site (N-linked (GlcNAc...) asparagine). A helical transmembrane segment spans residues 29–49; it reads LVFLVIYLITIVWNLGLIALI. Topologically, residues 50 to 56 are cytoplasmic; it reads WNDPQLH. The chain crosses the membrane as a helical span at residues 57–77; sequence IPMYFFLGSLAFVDAWISSTV. The Extracellular portion of the chain corresponds to 78-97; that stretch reads TPKMLVNFLAKNRMISLSEC. A disulfide bridge connects residues Cys97 and Cys179. A helical membrane pass occupies residues 98-118; sequence MIQFFSFAFGGTTECFLLATM. The Cytoplasmic segment spans residues 119-143; it reads AYDRYVAICKPLLYPVIMNNSLCIR. A helical membrane pass occupies residues 144–164; the sequence is LLAFSFLGGFLHALIHEVLIF. Residues 165-193 lie on the Extracellular side of the membrane; sequence RLTFCNSNIIHHFYCDIIPLFMISCTDPS. A helical membrane pass occupies residues 194 to 214; sequence INFLMVFILSGSIQVFTIVTV. Residues 215-239 lie on the Cytoplasmic side of the membrane; that stretch reads LNSYTFALFTILKKKSVRGVRKAFS. The chain crosses the membrane as a helical span at residues 240–260; that stretch reads TCGAHLLSVSLYYGPLIFMYL. Over 261 to 271 the chain is Extracellular; the sequence is RPASPQADDQD. A helical membrane pass occupies residues 272-292; that stretch reads MIDSVFYTIIIPLLNPIIYSL. Residues 293-309 lie on the Cytoplasmic side of the membrane; it reads RNKQVIDSFTKMVKRNV.

This sequence belongs to the G-protein coupled receptor 1 family.

It is found in the cell membrane. Odorant receptor. The sequence is that of Olfactory receptor 5H2 (OR5H2) from Homo sapiens (Human).